Here is a 276-residue protein sequence, read N- to C-terminus: Proteasome subunit beta type-8 (276 aa).

Residues 1 to 72 (MALLEVCGAP…KNIRKEMVHG (72 aa)) constitute a propeptide, removed in mature form. Thr-73 acts as the Nucleophile in catalysis.

Belongs to the peptidase T1B family. The 26S proteasome consists of a 20S proteasome core and two 19S regulatory subunits. The 20S proteasome core is composed of 28 subunits that are arranged in four stacked rings, resulting in a barrel-shaped structure. The two end rings are each formed by seven alpha subunits, and the two central rings are each formed by seven beta subunits. The catalytic chamber with the active sites is on the inside of the barrel. Component of the immunoproteasome, where it displaces the equivalent housekeeping subunit PSMB5. Component of the spermatoproteasome, a form of the proteasome specifically found in testis. Directly interacts with POMP. In terms of processing, autocleaved. The resulting N-terminal Thr residue of the mature subunit is responsible for the nucleophile proteolytic activity.

Its subcellular location is the cytoplasm. The protein resides in the nucleus. It carries out the reaction Cleavage of peptide bonds with very broad specificity.. Functionally, the proteasome is a multicatalytic proteinase complex which is characterized by its ability to cleave peptides with Arg, Phe, Tyr, Leu, and Glu adjacent to the leaving group at neutral or slightly basic pH. The proteasome has an ATP-dependent proteolytic activity. This subunit is involved in antigen processing to generate class I binding peptides. May participate in the generation of spliced peptides resulting from the ligation of two separate proteasomal cleavage products that are not contiguous in the parental protein. Required for adipocyte differentiation. This chain is Proteasome subunit beta type-8 (PSMB8), found in Canis lupus familiaris (Dog).